Here is a 407-residue protein sequence, read N- to C-terminus: Phosphopentomutase (407 aa).

Mn(2+)-binding residues include Asp-10, Asp-307, His-312, Asp-348, His-349, and His-360.

This sequence belongs to the phosphopentomutase family. Mn(2+) is required as a cofactor.

Its subcellular location is the cytoplasm. The enzyme catalyses 2-deoxy-alpha-D-ribose 1-phosphate = 2-deoxy-D-ribose 5-phosphate. The catalysed reaction is alpha-D-ribose 1-phosphate = D-ribose 5-phosphate. The protein operates within carbohydrate degradation; 2-deoxy-D-ribose 1-phosphate degradation; D-glyceraldehyde 3-phosphate and acetaldehyde from 2-deoxy-alpha-D-ribose 1-phosphate: step 1/2. Functionally, isomerase that catalyzes the conversion of deoxy-ribose 1-phosphate (dRib-1-P) and ribose 1-phosphate (Rib-1-P) to deoxy-ribose 5-phosphate (dRib-5-P) and ribose 5-phosphate (Rib-5-P), respectively. This Methylobacterium nodulans (strain LMG 21967 / CNCM I-2342 / ORS 2060) protein is Phosphopentomutase.